Here is a 305-residue protein sequence, read N- to C-terminus: Putative F-box protein PP2-B8 (305 aa).

Residues 33–79 (VAELDDLPEECVSIIVSFTSPQDACVLASVSKTFASAVKSDIVWEKF) form the F-box domain.

The protein is Putative F-box protein PP2-B8 (PP2B8) of Arabidopsis thaliana (Mouse-ear cress).